The following is a 293-amino-acid chain: Glycine--tRNA ligase alpha subunit (293 aa).

It belongs to the class-II aminoacyl-tRNA synthetase family. Tetramer of two alpha and two beta subunits.

It localises to the cytoplasm. The enzyme catalyses tRNA(Gly) + glycine + ATP = glycyl-tRNA(Gly) + AMP + diphosphate. The chain is Glycine--tRNA ligase alpha subunit from Wolinella succinogenes (strain ATCC 29543 / DSM 1740 / CCUG 13145 / JCM 31913 / LMG 7466 / NCTC 11488 / FDC 602W) (Vibrio succinogenes).